Consider the following 94-residue polypeptide: Aspartyl/glutamyl-tRNA(Asn/Gln) amidotransferase subunit C (94 aa).

Belongs to the GatC family. Heterotrimer of A, B and C subunits.

It catalyses the reaction L-glutamyl-tRNA(Gln) + L-glutamine + ATP + H2O = L-glutaminyl-tRNA(Gln) + L-glutamate + ADP + phosphate + H(+). The catalysed reaction is L-aspartyl-tRNA(Asn) + L-glutamine + ATP + H2O = L-asparaginyl-tRNA(Asn) + L-glutamate + ADP + phosphate + 2 H(+). Its function is as follows. Allows the formation of correctly charged Asn-tRNA(Asn) or Gln-tRNA(Gln) through the transamidation of misacylated Asp-tRNA(Asn) or Glu-tRNA(Gln) in organisms which lack either or both of asparaginyl-tRNA or glutaminyl-tRNA synthetases. The reaction takes place in the presence of glutamine and ATP through an activated phospho-Asp-tRNA(Asn) or phospho-Glu-tRNA(Gln). The protein is Aspartyl/glutamyl-tRNA(Asn/Gln) amidotransferase subunit C of Heliobacterium modesticaldum (strain ATCC 51547 / Ice1).